The primary structure comprises 311 residues: NAD kinase (311 aa).

Catalysis depends on Asp-88, which acts as the Proton acceptor. NAD(+)-binding positions include 88-89, 162-163, Arg-190, Asp-192, Val-200, and 203-208; these read DG, NE, and TAHNLS.

This sequence belongs to the NAD kinase family. The cofactor is a divalent metal cation.

It localises to the cytoplasm. The enzyme catalyses NAD(+) + ATP = ADP + NADP(+) + H(+). Involved in the regulation of the intracellular balance of NAD and NADP, and is a key enzyme in the biosynthesis of NADP. Catalyzes specifically the phosphorylation on 2'-hydroxyl of the adenosine moiety of NAD to yield NADP. This is NAD kinase from Rhodopirellula baltica (strain DSM 10527 / NCIMB 13988 / SH1).